The chain runs to 378 residues: Chaperone protein DnaJ (378 aa).

The J domain maps to 5–70 (DFYEILGVSK…EKRSAYDRMG (66 aa)). The CR-type zinc finger occupies 137-215 (GCKKEISFTA…CHGNGVKDKS (79 aa)). Zn(2+) contacts are provided by C150, C153, C167, C170, C189, C192, C203, and C206. 4 CXXCXGXG motif repeats span residues 150-157 (CDTCDGKG), 167-174 (CQTCHGQG), 189-196 (CPHCGGTG), and 203-210 (CSDCHGNG).

It belongs to the DnaJ family. Homodimer. Requires Zn(2+) as cofactor.

It is found in the cytoplasm. In terms of biological role, participates actively in the response to hyperosmotic and heat shock by preventing the aggregation of stress-denatured proteins and by disaggregating proteins, also in an autonomous, DnaK-independent fashion. Unfolded proteins bind initially to DnaJ; upon interaction with the DnaJ-bound protein, DnaK hydrolyzes its bound ATP, resulting in the formation of a stable complex. GrpE releases ADP from DnaK; ATP binding to DnaK triggers the release of the substrate protein, thus completing the reaction cycle. Several rounds of ATP-dependent interactions between DnaJ, DnaK and GrpE are required for fully efficient folding. Also involved, together with DnaK and GrpE, in the DNA replication of plasmids through activation of initiation proteins. In Psychrobacter cryohalolentis (strain ATCC BAA-1226 / DSM 17306 / VKM B-2378 / K5), this protein is Chaperone protein DnaJ.